Consider the following 227-residue polypeptide: MSAPTGQPAYVLHSRAYRENSALVDFLTPQGRLRAVLRSAKGKAGSLARPFVPLEVEFRGRGELKNVGRMESAGVATWMTGEALFSGMYLNELLIRLLPAEDPHPAVFEHYAATLLALALGRPLEPLLRSFEWRLLDDLGYGFAMDADINGEPLAIDGMYRLQVDAGLERVYLLQPGLFQGAELLAMSEADWSVPGALSAAKRLMRQALAVHLGGRPLVSRELFRKP.

It belongs to the RecO family.

In terms of biological role, involved in DNA repair and RecF pathway recombination. In Pseudomonas savastanoi pv. phaseolicola (strain 1448A / Race 6) (Pseudomonas syringae pv. phaseolicola (strain 1448A / Race 6)), this protein is DNA repair protein RecO.